The following is a 177-amino-acid chain: Glia associated membrane protein glam-1 (177 aa).

Helical transmembrane passes span 19-39 (PLVVGLAVFGAIRSFVQFWMS), 42-62 (FGMAGTHFCVLLLDLLLLFGA), and 76-96 (VTFACVLIAIIRFMIYPVVFA).

Its subcellular location is the membrane. The polypeptide is Glia associated membrane protein glam-1 (Caenorhabditis elegans).